Here is a 66-residue protein sequence, read N- to C-terminus: Phylloseptin-H8 (66 aa).

A signal peptide spans 1 to 22; that stretch reads MAFLKKSLFLVLFLGLVSLSIC. Positions 23-44 are excised as a propeptide; the sequence is EEEKRETEEEENDQEEDDKSEE. Positions 25 to 44 are disordered; sequence EKRETEEEENDQEEDDKSEE. Residues 30 to 41 show a composition bias toward acidic residues; that stretch reads EEEENDQEEDDK. L65 carries the leucine amide modification.

Expressed by the skin glands.

The protein localises to the secreted. Its function is as follows. Has antimicrobial activity. The protein is Phylloseptin-H8 of Pithecopus hypochondrialis (Orange-legged leaf frog).